A 517-amino-acid polypeptide reads, in one-letter code: Pseudaminic acid cytidylyltransferase and UDP-2,4-diacetamido-2,4,6-trideoxy-beta-L-altropyranose hydrolase (517 aa).

Residues 1–208 (MRAIAIVLAR…ELSPLEVQDI (208 aa)) are pseudaminic acid cytidylyltransferase. Residues 209 to 517 (AHFRRFRISQ…EGALREFLEI (309 aa)) form a UDP-2,4-diacetamido-2,4,6-trideoxy-beta-L-altropyranose hydrolase region. Histidine 244 serves as the catalytic Proton acceptor; for UDP-2,4-diacetamido-2,4,6-trideoxy-beta-L-altropyranose hydrolase activity.

In the N-terminal section; belongs to the CMP-NeuNAc synthase family. It in the C-terminal section; belongs to the PseG family. As to quaternary structure, monomer. Requires Mg(2+) as cofactor.

It catalyses the reaction UDP-2,4-diacetamido-2,4,6-trideoxy-beta-L-altrose + H2O = 2,4-diacetamido-2,4,6-trideoxy-beta-L-altrose + UDP + H(+). It carries out the reaction pseudaminate + CTP = CMP-pseudaminate + diphosphate. Catalyzes the fourth and sixth steps in the biosynthesis of pseudaminic acid, a sialic-acid-like sugar that is used to modify flagellin. The C-terminus mediates the fourth step of the pathway and catalyzes the removal of UDP from C-1 of UDP-2,4-diacetamido-2,4,6-trideoxy-beta-L-altropyranose forming 2,4-diacetamido-2,4,6-trideoxy-beta-L-altropyranose. The N-terminal part mediates the last step of the pathway by mediating activation of pseudaminic acid with CMP by forming CMP-pseudaminic acid. In Helicobacter pylori (strain ATCC 700392 / 26695) (Campylobacter pylori), this protein is Pseudaminic acid cytidylyltransferase and UDP-2,4-diacetamido-2,4,6-trideoxy-beta-L-altropyranose hydrolase.